The following is a 418-amino-acid chain: Histidine--tRNA ligase (418 aa).

This sequence belongs to the class-II aminoacyl-tRNA synthetase family.

Its subcellular location is the cytoplasm. The enzyme catalyses tRNA(His) + L-histidine + ATP = L-histidyl-tRNA(His) + AMP + diphosphate + H(+). The polypeptide is Histidine--tRNA ligase (Methanococcus vannielii (strain ATCC 35089 / DSM 1224 / JCM 13029 / OCM 148 / SB)).